Here is a 285-residue protein sequence, read N- to C-terminus: HTH-type transcriptional regulator MurR (285 aa).

The HTH rpiR-type domain occupies methionine 1 to serine 77. The H-T-H motif DNA-binding region spans serine 37–glutamine 56. The SIS domain occupies isoleucine 128 to valine 268.

In terms of assembly, homotetramer.

The protein operates within amino-sugar metabolism; N-acetylmuramate degradation [regulation]. Represses the expression of the murPQ operon involved in the uptake and degradation of N-acetylmuramic acid (MurNAc). Binds to two adjacent inverted repeats within the operator region. MurNAc 6-phosphate, the substrate of MurQ, is the specific inducer that weakens binding of MurR to the operator. This Escherichia coli (strain K12 / MC4100 / BW2952) protein is HTH-type transcriptional regulator MurR.